The following is a 387-amino-acid chain: MEAILKIGDIVENKYQIEKLLNRGGMDSYLFLAKNLNLKNYGPVQKKQYGHLVLKVVQKNPKINENNWKKFLDEMVTTTRVHHSNLVKSFDVVNPFLKIVRGNKTIALNQIVMIAMEYVDGPSLRQLLNRKGYFSVSEVVYYFTKIVKAIDYLHSFKHQIIHRDLKPENILFTSDLTDIKLLDFGIASTVVKVAEKTEVLTDENSLFGTVSYMIPDVLESTVNKAGKKVRKPPNAQYDIYSLGIILFEMLVGRVPFNKSINPNKERETIQKARNFDLPLMQATRSDIPNSLENIAFRCTAVKRENNKWLYSSTKELLEDLANWENEQAMIKPANERVLEGQVEIREMMLEKPLAWYFKTWALSIFTIVFIGLIIAAIVLLLIFNARF.

The Protein kinase domain occupies 15-344 (YQIEKLLNRG…ERVLEGQVEI (330 aa)). Residues 21–29 (LNRGGMDSY) and lysine 55 each bind ATP. Aspartate 164 acts as the Proton acceptor in catalysis. Transmembrane regions (helical) follow at residues 232–252 (PPNA…MLVG) and 363–383 (SIFT…LLIF).

The protein belongs to the protein kinase superfamily. Ser/Thr protein kinase family.

The protein localises to the cell membrane. The enzyme catalyses L-seryl-[protein] + ATP = O-phospho-L-seryl-[protein] + ADP + H(+). It carries out the reaction L-threonyl-[protein] + ATP = O-phospho-L-threonyl-[protein] + ADP + H(+). The chain is Putative serine/threonine-protein kinase from Mycoplasma genitalium (strain ATCC 33530 / DSM 19775 / NCTC 10195 / G37) (Mycoplasmoides genitalium).